The chain runs to 65 residues: Photosystem II reaction center protein J (65 aa).

Residues 35–55 (LWLVATAGGTAVIFVLGIFFY) form a helical membrane-spanning segment.

This sequence belongs to the PsbJ family. As to quaternary structure, PSII is composed of 1 copy each of membrane proteins PsbA, PsbB, PsbC, PsbD, PsbE, PsbF, PsbH, PsbI, PsbJ, PsbK, PsbL, PsbM, PsbT, PsbX, PsbY, Psb30/Ycf12, peripheral proteins PsbO, CyanoQ (PsbQ), PsbU, PsbV and a large number of cofactors. It forms dimeric complexes.

It is found in the cellular thylakoid membrane. Its function is as follows. One of the components of the core complex of photosystem II (PSII). PSII is a light-driven water:plastoquinone oxidoreductase that uses light energy to abstract electrons from H(2)O, generating O(2) and a proton gradient subsequently used for ATP formation. It consists of a core antenna complex that captures photons, and an electron transfer chain that converts photonic excitation into a charge separation. This is Photosystem II reaction center protein J from Prochlorococcus marinus (strain NATL2A).